A 254-amino-acid polypeptide reads, in one-letter code: NAD kinase (254 aa).

D44 (proton acceptor) is an active-site residue. Residues 44-45 (DG), 114-115 (NE), D144, A152, 155-160 (TAYNYS), and A179 each bind NAD(+).

The protein belongs to the NAD kinase family. It depends on a divalent metal cation as a cofactor.

It localises to the cytoplasm. The enzyme catalyses NAD(+) + ATP = ADP + NADP(+) + H(+). Involved in the regulation of the intracellular balance of NAD and NADP, and is a key enzyme in the biosynthesis of NADP. Catalyzes specifically the phosphorylation on 2'-hydroxyl of the adenosine moiety of NAD to yield NADP. This is NAD kinase from Cereibacter sphaeroides (strain ATCC 17023 / DSM 158 / JCM 6121 / CCUG 31486 / LMG 2827 / NBRC 12203 / NCIMB 8253 / ATH 2.4.1.) (Rhodobacter sphaeroides).